A 274-amino-acid polypeptide reads, in one-letter code: Transmembrane O-methyltransferase (274 aa).

The chain crosses the membrane as a helical span at residues 14–34; the sequence is VGTMSPAIALAFLPLVVTLLV. S-adenosyl-L-methionine-binding positions include E120, 122 to 123, S128, E146, and S176; that span reads GT.

It belongs to the class I-like SAM-binding methyltransferase superfamily. Cation-dependent O-methyltransferase family. As to quaternary structure, interacts with LHFPL5, PCDH15, TMC1, TMC2 and TMIE. Interacts directly with TMC1. The interaction of TOMT with TMC1 and TMC2 is required for the transportation of TMC1/2 into the stereocilia of hair cells.

It is found in the membrane. It localises to the cytoplasm. The protein localises to the endoplasmic reticulum. The enzyme catalyses a catechol + S-adenosyl-L-methionine = a guaiacol + S-adenosyl-L-homocysteine + H(+). In terms of biological role, catalyzes the O-methylation, and thereby the inactivation, of catecholamine neurotransmitters and catechol hormones. Required for auditory function. Component of the cochlear hair cell's mechanotransduction (MET) machinery. Involved in the assembly of the asymmetric tip-link MET complex. Required for transportation of TMC1 and TMC2 proteins into the mechanically sensitive stereocilia of the hair cells. The function in MET is independent of the enzymatic activity. This is Transmembrane O-methyltransferase from Propithecus coquereli (Coquerel's sifaka).